We begin with the raw amino-acid sequence, 360 residues long: Nucleoporin SEH1 (360 aa).

WD repeat units follow at residues 10-49 (DHKD…DWHC), 55-96 (THSG…SNDK), 111-152 (DSRT…NLSQ), 160-210 (SCKL…RKYA), 217-258 (SVSD…KELS), and 276-315 (NHNS…NWKC).

The protein belongs to the WD repeat SEC13 family. Component of the Nup107-160 subcomplex of the nuclear pore complex (NPC). The Nup107-160 subcomplex includes NUP160, NUP133, NUP107, NUP98, NUP85, NUP43, NUP37, SEH1 and SEC13. Component of the GATOR2 subcomplex, composed of MIOS, SEC13, SEH1L, WDR24 and WDR59. The GATOR2 complex interacts with CASTOR1 and CASTOR2; the interaction is negatively regulated by arginine. The GATOR2 complex interacts with SESN1, SESN2 and SESN3; the interaction is negatively regulated by amino acids.

The protein localises to the chromosome. Its subcellular location is the centromere. It localises to the kinetochore. The protein resides in the nucleus. It is found in the nuclear pore complex. The protein localises to the lysosome membrane. Its activity is regulated as follows. The GATOR2 complex is negatively regulated by the upstream amino acid sensors CASTOR1 and SESN2, which sequester the GATOR2 complex in absence of amino acids. In the presence of abundant amino acids, GATOR2 is released from CASTOR1 and SESN2 and activated. In terms of biological role, component of the Nup107-160 subcomplex of the nuclear pore complex (NPC). The Nup107-160 subcomplex is required for the assembly of a functional NPC. The Nup107-160 subcomplex is also required for normal kinetochore microtubule attachment, mitotic progression and chromosome segregation. This subunit plays a role in recruitment of the Nup107-160 subcomplex to the kinetochore. Functionally, as a component of the GATOR2 complex, functions as an activator of the amino acid-sensing branch of the mTORC1 signaling pathway. The GATOR2 complex indirectly activates mTORC1 through the inhibition of the GATOR1 subcomplex. GATOR2 probably acts as an E3 ubiquitin-protein ligase toward GATOR1. In the presence of abundant amino acids, the GATOR2 complex mediates ubiquitination of the NPRL2 core component of the GATOR1 complex, leading to GATOR1 inactivation. In the absence of amino acids, GATOR2 is inhibited, activating the GATOR1 complex. This is Nucleoporin SEH1 (seh1l) from Xenopus tropicalis (Western clawed frog).